The following is a 268-amino-acid chain: Undecaprenyl-diphosphatase (268 aa).

Transmembrane regions (helical) follow at residues 47–67, 83–103, 109–129, 144–164, 184–204, 218–238, and 246–266; these read FAIL…FFKL, FIIG…IAGK, LFDP…LLWV, YPLL…IPGV, AAEF…VYDF, LVAI…KAFL, and FVLF…ALAL.

This sequence belongs to the UppP family.

It is found in the cell inner membrane. It carries out the reaction di-trans,octa-cis-undecaprenyl diphosphate + H2O = di-trans,octa-cis-undecaprenyl phosphate + phosphate + H(+). Catalyzes the dephosphorylation of undecaprenyl diphosphate (UPP). Confers resistance to bacitracin. The sequence is that of Undecaprenyl-diphosphatase from Bradyrhizobium sp. (strain BTAi1 / ATCC BAA-1182).